We begin with the raw amino-acid sequence, 433 residues long: Divalent metal cation transporter MntH (433 aa).

Helical transmembrane passes span 32–52 (LIFAGPAVVASIAYMDPGNFA), 62–82 (GYDLLWVVLLASLIAMLFQGL), 101–121 (TLPPALTIPMWIISEIAAMAT), 131–151 (IGIALLAHLPLMAGMAITGIV), 168–188 (LVIGALVGVIALCYLAELLIV), 209–229 (ALTIAVGIVGATVMPHALFLH), 256–276 (VLAALGVAGMVNMAMVAMAAG), 296–316 (SPLLGAGAAVIFLISLLASGV), 345–365 (ALTMIPGFVVIGLGVNPTRAL), 366–386 (VLSQVVLSLALPVPMLALLWF), and 401–421 (ITAIAAIGGAIVILGLNVILL).

Belongs to the NRAMP family.

The protein localises to the cell inner membrane. In terms of biological role, h(+)-stimulated, divalent metal cation uptake system. The chain is Divalent metal cation transporter MntH from Acidiphilium cryptum (strain JF-5).